The sequence spans 761 residues: Zinc finger protein 287 (761 aa).

The SCAN box domain occupies 49–131 (RQNFRNFPYP…TLVEDLTQIL (83 aa)). Positions 134 to 154 (EAPQNSTLSQDTPEEDPRGKH) are disordered. The KRAB domain maps to 170 to 238 (MTFKDVAVDI…IKEILEGPSP (69 aa)). 14 consecutive C2H2-type zinc fingers follow at residues 368–390 (YKCN…QSTH), 396–418 (YECE…QRMH), 424–446 (YECH…QRIH), 452–474 (YKCD…QRTH), 480–502 (YKCL…QRVH), 508–530 (YICN…QKIH), 536–558 (YKCN…QRIH), 564–586 (YKCN…QTTH), 592–614 (YICN…HRTH), 620–642 (YKCS…QRIH), 648–670 (FKCN…QRIH), 676–698 (YKCN…QRTH), 704–726 (YKCN…QRIH), and 732–754 (YACR…QRVH).

Belongs to the krueppel C2H2-type zinc-finger protein family.

It is found in the nucleus. In terms of biological role, may be involved in transcriptional regulation. This chain is Zinc finger protein 287, found in Pongo pygmaeus (Bornean orangutan).